The following is a 288-amino-acid chain: Bifunctional protein FolD (288 aa).

NADP(+)-binding positions include 164–166 (GRS) and V230.

Belongs to the tetrahydrofolate dehydrogenase/cyclohydrolase family. As to quaternary structure, homodimer.

It carries out the reaction (6R)-5,10-methylene-5,6,7,8-tetrahydrofolate + NADP(+) = (6R)-5,10-methenyltetrahydrofolate + NADPH. It catalyses the reaction (6R)-5,10-methenyltetrahydrofolate + H2O = (6R)-10-formyltetrahydrofolate + H(+). It participates in one-carbon metabolism; tetrahydrofolate interconversion. Its function is as follows. Catalyzes the oxidation of 5,10-methylenetetrahydrofolate to 5,10-methenyltetrahydrofolate and then the hydrolysis of 5,10-methenyltetrahydrofolate to 10-formyltetrahydrofolate. This is Bifunctional protein FolD from Thermomicrobium roseum (strain ATCC 27502 / DSM 5159 / P-2).